A 155-amino-acid chain; its full sequence is MTKKKSSGGALIAQNKKARHLYELLEFFEAGIALAGTEVKSLRAGQVSFTDSYVTIHNNEAWIVGMHIAPYANAGYVQHDPDRDRKLLLHAREIDTLRARVEQKGLTVVPVKLYFKNSRVKLEIAVGRGKKLHDKRQDIKQRDVERETRREIMRH.

Positions 135–155 (KRQDIKQRDVERETRREIMRH) are disordered.

This sequence belongs to the SmpB family.

The protein resides in the cytoplasm. Its function is as follows. Required for rescue of stalled ribosomes mediated by trans-translation. Binds to transfer-messenger RNA (tmRNA), required for stable association of tmRNA with ribosomes. tmRNA and SmpB together mimic tRNA shape, replacing the anticodon stem-loop with SmpB. tmRNA is encoded by the ssrA gene; the 2 termini fold to resemble tRNA(Ala) and it encodes a 'tag peptide', a short internal open reading frame. During trans-translation Ala-aminoacylated tmRNA acts like a tRNA, entering the A-site of stalled ribosomes, displacing the stalled mRNA. The ribosome then switches to translate the ORF on the tmRNA; the nascent peptide is terminated with the 'tag peptide' encoded by the tmRNA and targeted for degradation. The ribosome is freed to recommence translation, which seems to be the essential function of trans-translation. The sequence is that of SsrA-binding protein from Oleidesulfovibrio alaskensis (strain ATCC BAA-1058 / DSM 17464 / G20) (Desulfovibrio alaskensis).